Consider the following 115-residue polypeptide: Promotilin (115 aa).

The N-terminal stretch at 1–25 is a signal peptide; the sequence is MVSRKAVAALLVVHVAAMLASQTEA. The tract at residues 39–72 is disordered; it reads QEKERNKGQKKSLSVWQRSGEEGPVDPAEPIREE.

The protein belongs to the motilin family.

The protein localises to the secreted. Functionally, plays an important role in the regulation of interdigestive gastrointestinal motility and indirectly causes rhythmic contraction of duodenal and colonic smooth muscle. The polypeptide is Promotilin (MLN) (Homo sapiens (Human)).